We begin with the raw amino-acid sequence, 169 residues long: MPCRKESFLLLEQSVTVGSGEVDTLVARIGEALQLNAQRTPTSCSMAYGALKPVSRAGPSCSCVRGRSTPYPVCTPRGAARHAQHHHHHSPRQQGTGGNKRLCGRGWGRCNCRKHAGTEEEDDPHELLQELLLSGNLIKEAVRRLHMAGESPDPPGSRRVSECTETTVQ.

Residues 75–100 (TPRGAARHAQHHHHHSPRQQGTGGNK) form a disordered region. Over residues 79–91 (AARHAQHHHHHSP) the composition is skewed to basic residues. An involved in GSK-3 binding region spans residues 122–145 (DDPHELLQELLLSGNLIKEAVRRL). Residues 147–169 (MAGESPDPPGSRRVSECTETTVQ) form a disordered region.

Belongs to the GSK-3-binding protein family.

Binds GSK-3 and prevents GSK-3-dependent phosphorylation. Regulates the stability of beta-catenin in embryos. Maternal GBP is required for dorsal-ventral axis formation. The protein is GSK-3-binding protein (gbp) of Xenopus laevis (African clawed frog).